A 219-amino-acid polypeptide reads, in one-letter code: MNQLEMKKLAAQAALQYVKADTIVGVGSGSTVNCFIEALGTIKDKIQGAVAASKESEELLRKQGIEVFNANDVSSLDIYVDGADEINPQKMMIKGGGAALTREKIVAALAKKFICIVDSSKQVDVLGSTFPLPVEVIPMARSQVGRKLVALGGSPEYREDVVTDNGNVILDVHNFSILNPVEMEKELNNVSGVVTNGIFALRGADVVIVGTPEGAKIID.

Substrate-binding positions include 28–31 (SGST), 81–84 (DGAD), and 94–97 (KGGG). Residue Glu-103 is the Proton acceptor of the active site. Lys-121 is a binding site for substrate.

Belongs to the ribose 5-phosphate isomerase family. In terms of assembly, homodimer.

The enzyme catalyses aldehydo-D-ribose 5-phosphate = D-ribulose 5-phosphate. It functions in the pathway carbohydrate degradation; pentose phosphate pathway; D-ribose 5-phosphate from D-ribulose 5-phosphate (non-oxidative stage): step 1/1. Catalyzes the reversible conversion of ribose-5-phosphate to ribulose 5-phosphate. In Haemophilus influenzae (strain PittGG), this protein is Ribose-5-phosphate isomerase A.